The sequence spans 206 residues: Guanylate kinase (206 aa).

A Guanylate kinase-like domain is found at Pro-13 to Ser-193. Gly-20–Asp-27 contributes to the ATP binding site.

The protein belongs to the guanylate kinase family.

The protein resides in the cytoplasm. The enzyme catalyses GMP + ATP = GDP + ADP. Functionally, essential for recycling GMP and indirectly, cGMP. The chain is Guanylate kinase from Dehalococcoides mccartyi (strain ATCC BAA-2266 / KCTC 15142 / 195) (Dehalococcoides ethenogenes (strain 195)).